We begin with the raw amino-acid sequence, 173 residues long: Photosystem I assembly protein Ycf3 (173 aa).

TPR repeat units follow at residues 36-69 (AFAY…EQDD), 73-106 (SYIL…NPRL), and 121-154 (GEQS…APNN).

This sequence belongs to the Ycf3 family.

Its subcellular location is the cellular thylakoid membrane. Essential for the assembly of the photosystem I (PSI) complex. May act as a chaperone-like factor to guide the assembly of the PSI subunits. The protein is Photosystem I assembly protein Ycf3 of Synechococcus sp. (strain JA-3-3Ab) (Cyanobacteria bacterium Yellowstone A-Prime).